Reading from the N-terminus, the 333-residue chain is Fructose-1,6-bisphosphatase class 1 (333 aa).

Mg(2+)-binding residues include Glu89, Asp112, Leu114, and Asp115. Residues 115-118 (DGSS), Asn208, Tyr241, and Lys271 contribute to the substrate site. Position 277 (Glu277) interacts with Mg(2+).

Belongs to the FBPase class 1 family. Homotetramer. Requires Mg(2+) as cofactor.

Its subcellular location is the cytoplasm. The catalysed reaction is beta-D-fructose 1,6-bisphosphate + H2O = beta-D-fructose 6-phosphate + phosphate. It participates in carbohydrate biosynthesis; gluconeogenesis. In Haemophilus influenzae (strain ATCC 51907 / DSM 11121 / KW20 / Rd), this protein is Fructose-1,6-bisphosphatase class 1.